The chain runs to 779 residues: MPVVKGGVWTNIEDEILKASVSKYGLNQWARVSSLLARKTPKQCKARWNEWLDPSIKKIEWSKEEDEKLLHLAKLMPTQWRTIAPIVGRTANQCLERYQRLLDEAEQREASALGLTGPDGGEAHAPSADDVRKLRPGEVDPDPETKPARPDTIDLDEDEKEMLSEARARLANTQGKKAKRKARERQQEESRRLAALQKRRELKTAGINIKVTTKKQGQMDYNADIPFEKKPVPGFYDTTEEMSRNEYQRAHFDPKKQQVGNKRKGEEDERDGKRRKGDKDPSVQAALKAGQLQKMREAEQSSKRRALVLPAPQVGEGELEEIVKMGMIGERANMLARESDNDATRGLINNYSTLNTNAPIRTPMAPAQEDHIANEIRNIRALTETQSSLLGGENTPLHQGVGSTGFESVAPRKQVMSTPNPLATPLRAAGAGPGATPLRVGQTPLRTPRDTFALNDAGDEMSMVGGTPRDVKMREMSIRHQLKQGLASLPKPKETEWELELPDDQQEPKTAEQLEEDAAERDRREREIREARELLERKRRTQVMQRDLPRPVQVDYQSLLKEASQAEDPVKVLIAREAALLVAHDATKYPLPGAQPTGRALEIQKIDDAALQEAKLQVLMEIKDKPKPEEVQAVWEKSNSSSLLLGLGCYEDDEEEEQISTMQIALEEVIDQIVASAEKGNKLEKKLNLHLGGYKNRAEMLRKKISEAHEALEKANNALGAFKVLQSSEQAAIRNRLAALREEVGFVSTREREAQELYRRTREELDALTLNGPKANGFR.

2 consecutive HTH myb-type domains span residues 1–56 and 57–106; these read MPVV…DPSI and KKIE…DEAE. 2 consecutive DNA-binding regions (H-T-H motif) follow at residues 29–52 and 80–102; these read WARV…NEWL and WRTI…QRLL. 4 disordered regions span residues 113–192, 246–284, 424–448, and 497–525; these read LGLT…ESRR, EYQR…PSVQ, TPLR…LRTP, and WELE…DRRE. Residues 127–152 are compositionally biased toward basic and acidic residues; sequence SADDVRKLRPGEVDPDPETKPARPDT. Residues 157 to 204 adopt a coiled-coil conformation; the sequence is EDEKEMLSEARARLANTQGKKAKRKARERQQEESRRLAALQKRRELKT. 2 stretches are compositionally biased toward basic and acidic residues: residues 246–256 and 263–281; these read EYQRAHFDPKK and RKGE…DKDP. A coiled-coil region spans residues 653 to 772; the sequence is DEEEEQISTM…EELDALTLNG (120 aa).

The protein belongs to the CEF1 family. In terms of assembly, associated with the spliceosome.

The protein resides in the cytoplasm. It is found in the nucleus. Its function is as follows. Involved in pre-mRNA splicing and cell cycle control. This Neurospora crassa (strain ATCC 24698 / 74-OR23-1A / CBS 708.71 / DSM 1257 / FGSC 987) protein is Pre-mRNA-splicing factor cef-1 (cef-1).